The sequence spans 64 residues: Prokaryotic ubiquitin-like protein UBact (64 aa).

2 stretches are compositionally biased toward basic and acidic residues: residues 1–12 (MSDLFRMEERRQ) and 33–64 (PDVKRPDTSDLLRRMKRVDPDAARRYRQRSGE). Residues 1–64 (MSDLFRMEER…ARRYRQRSGE (64 aa)) form a disordered region. Glutamate 64 participates in a covalent cross-link: Isoglutamyl lysine isopeptide (Glu-Lys) (interchain with K-? in acceptor proteins).

The protein belongs to the ubiquitin-like protein UBact family.

May function as a protein modifier covalently attached to lysine residues of substrate proteins. This may serve to target the modified proteins for degradation by proteasomes. The protein is Prokaryotic ubiquitin-like protein UBact of Chthonomonas calidirosea (strain DSM 23976 / ICMP 18418 / T49).